We begin with the raw amino-acid sequence, 209 residues long: Uracil phosphoribosyltransferase (209 aa).

5-phospho-alpha-D-ribose 1-diphosphate contacts are provided by residues Arg-79, Arg-104, and 131-139; that span reads DPMLATGGS. Residues Ile-194 and 199 to 201 each bind uracil; that span reads GDA. Asp-200 provides a ligand contact to 5-phospho-alpha-D-ribose 1-diphosphate.

It belongs to the UPRTase family. Mg(2+) is required as a cofactor.

The enzyme catalyses UMP + diphosphate = 5-phospho-alpha-D-ribose 1-diphosphate + uracil. It participates in pyrimidine metabolism; UMP biosynthesis via salvage pathway; UMP from uracil: step 1/1. Allosterically activated by GTP. Its function is as follows. Catalyzes the conversion of uracil and 5-phospho-alpha-D-ribose 1-diphosphate (PRPP) to UMP and diphosphate. This Bacillus velezensis (strain DSM 23117 / BGSC 10A6 / LMG 26770 / FZB42) (Bacillus amyloliquefaciens subsp. plantarum) protein is Uracil phosphoribosyltransferase.